Here is a 483-residue protein sequence, read N- to C-terminus: MLRESRMKKGMDPKALKLSSSIEHDKNIFLYDILVDVAHVLTLKKGGYLSEEEAKEIILALKKVKDSGFREDWPYEDVHEAIEAEVTKITPHGAKMHTGRSRNDEVATCLRMFARDHLLNLAEAILNALDVLIKKAEKSHFLMPGFTHLQYAQPTRLSHHLLAYHDMLSRDFERAIEAFRRVNKSPLGSAAFASTGYSLDRVYAARLLGFDGVVEHSEDAVASRDFVIESIFVAAEAMLSISRIAEEIVLFSSEFGFITLPDEFSSTSSIMPQKKNPDIAELLRANAGKIAGNLTSAMMIYKATPFSYNRDFQEMNPLLYESLKRTHLAVEVFASMMGKIKFNPEITERKASKGFATATELADMLVMKYGVPFRMAHRIVGRLAAKELERPTASDVNSAAKELGVEINVRDEDVLEALDVEKVVENRGNLGGTSKAEVERMIKARKSDLKDRKTLLRKLRGEVKMGLKMLYDEAKKLGVDINV.

It belongs to the lyase 1 family. Argininosuccinate lyase subfamily.

The protein localises to the cytoplasm. The catalysed reaction is 2-(N(omega)-L-arginino)succinate = fumarate + L-arginine. Its pathway is amino-acid biosynthesis; L-arginine biosynthesis; L-arginine from L-ornithine and carbamoyl phosphate: step 3/3. The sequence is that of Argininosuccinate lyase from Archaeoglobus fulgidus (strain ATCC 49558 / DSM 4304 / JCM 9628 / NBRC 100126 / VC-16).